The chain runs to 299 residues: Mitochondrial 2-oxodicarboxylate carrier (299 aa).

Solcar repeat units follow at residues 11–100, 107–196, and 205–294; these read REAS…YKKL, SPAL…VKNM, and LEFW…TYSW. 6 consecutive transmembrane segments (helical) span residues 17–37, 70–89, 113–133, 167–187, 205–225, and 277–297; these read IVAG…LDVV, FGFY…KRAV, AIAG…FEVV, GLNK…MVYF, LEFW…SVIN, and LGPG…WLQE.

The protein belongs to the mitochondrial carrier (TC 2.A.29) family. In terms of tissue distribution, expressed in placenta, gall bladder and colon.

It localises to the mitochondrion inner membrane. The enzyme catalyses 2-oxoadipate(in) + 2-oxoglutarate(out) = 2-oxoadipate(out) + 2-oxoglutarate(in). The catalysed reaction is hexanedioate(in) + 2-oxoglutarate(out) = hexanedioate(out) + 2-oxoglutarate(in). It carries out the reaction L-2-aminoadipate(in) + 2-oxoglutarate(out) = L-2-aminoadipate(out) + 2-oxoglutarate(in). It catalyses the reaction glutarate(in) + 2-oxoglutarate(out) = glutarate(out) + 2-oxoglutarate(in). The enzyme catalyses 2-oxoheptanedioate(in) + 2-oxoglutarate(out) = 2-oxoheptanedioate(out) + 2-oxoglutarate(in). The catalysed reaction is heptanedioate(in) + 2-oxoglutarate(out) = heptanedioate(out) + 2-oxoglutarate(in). It carries out the reaction citrate(in) + 2-oxoglutarate(out) = citrate(out) + 2-oxoglutarate(in). Functionally, transports dicarboxylates across the inner membranes of mitochondria by a counter-exchange mechanism. Can transport 2-oxoadipate (2-oxohexanedioate), 2-oxoglutarate, adipate (hexanedioate), glutarate, and to a lesser extent, pimelate (heptanedioate), 2-oxopimelate (2-oxoheptanedioate), 2-aminoadipate (2-aminohexanedioate), oxaloacetate, and citrate. Plays a central role in catabolism of lysine, hydroxylysine, and tryptophan, by transporting common metabolite intermediates (such as 2-oxoadipate) into the mitochondria, where it is converted into acetyl-CoA and can enter the citric acid (TCA) cycle. The protein is Mitochondrial 2-oxodicarboxylate carrier (SLC25A21) of Homo sapiens (Human).